Reading from the N-terminus, the 514-residue chain is Maturase K (514 aa).

Belongs to the intron maturase 2 family. MatK subfamily.

It localises to the plastid. Its subcellular location is the chloroplast. Usually encoded in the trnK tRNA gene intron. Probably assists in splicing its own and other chloroplast group II introns. This Encephalartos altensteinii (Altenstein's bread tree) protein is Maturase K.